Reading from the N-terminus, the 341-residue chain is Probable UDP-glucuronate 4-epimerase (341 aa).

Catalysis depends on tyrosine 152, which acts as the Proton acceptor.

This sequence belongs to the NAD(P)-dependent epimerase/dehydratase family. The cofactor is NAD(+).

It carries out the reaction UDP-alpha-D-glucuronate = UDP-alpha-D-galacturonate. This is Probable UDP-glucuronate 4-epimerase from Rhizobium meliloti (strain 1021) (Ensifer meliloti).